The sequence spans 294 residues: 7,8-dihydropterin-6-methyl-4-(beta-D-ribofuranosyl)-aminobenzene-5'-phosphate synthase (294 aa).

Residues glutamate 116, aspartate 186, lysine 228, and histidine 265 each coordinate substrate.

The protein belongs to the metallo-beta-lactamase superfamily. Mg(2+) serves as cofactor.

The catalysed reaction is 4-(beta-D-ribofuranosyl)aminobenzene 5'-phosphate + (7,8-dihydropterin-6-yl)methyl diphosphate = N-[(7,8-dihydropterin-6-yl)methyl]-4-(beta-D-ribofuranosyl)aniline 5'-phosphate + diphosphate. It participates in cofactor biosynthesis; 5,6,7,8-tetrahydromethanopterin biosynthesis. Its function is as follows. Catalyzes the condensation of 6-hydroxymethyl-7,8-dihydropterin pyrophosphate (DHPP) with 4-(beta-D-ribofuranosyl)-aminobenzene-5'-phosphate (beta-RFA-P) to form 7,8-dihydropterin-6-methyl-4-(beta-D-ribofuranosyl)-aminobenzene-5'-phosphate, a precursor in the biosynthesis of 5,6,7,8-tetrahydromethanopterin (H4MPT). To a lesser extent, is able to condense beta-RFA-P with another arylamine, 1-(4-aminophenyl)-1-deoxy-D-ribitol (APDR), to form 7,8-dihydropterin-6-methyl-1-(4-aminophenyl)-1-deoxy-D-ribitol. Dephosphorylated beta-RFA-P is not a substrate. In Methanocaldococcus jannaschii (strain ATCC 43067 / DSM 2661 / JAL-1 / JCM 10045 / NBRC 100440) (Methanococcus jannaschii), this protein is 7,8-dihydropterin-6-methyl-4-(beta-D-ribofuranosyl)-aminobenzene-5'-phosphate synthase.